A 246-amino-acid polypeptide reads, in one-letter code: Zinc import ATP-binding protein ZnuC (246 aa).

In terms of domain architecture, ABC transporter spans 24–244; sequence LKIENLALAY…TLGEIFSSYI (221 aa). 56–63 lines the ATP pocket; that stretch reads GPNGGGKT.

This sequence belongs to the ABC transporter superfamily. Zinc importer (TC 3.A.1.15.5) family. In terms of assembly, the complex is composed of two ATP-binding proteins (ZnuC), two transmembrane proteins (ZnuB) and a solute-binding protein (ZnuA).

It localises to the cell membrane. It carries out the reaction Zn(2+)(out) + ATP(in) + H2O(in) = Zn(2+)(in) + ADP(in) + phosphate(in) + H(+)(in). Its function is as follows. Part of the ABC transporter complex ZnuABC involved in zinc import. Responsible for energy coupling to the transport system. This is Zinc import ATP-binding protein ZnuC from Wolbachia sp. subsp. Brugia malayi (strain TRS).